The sequence spans 273 residues: Testis-specific serine/threonine-protein kinase 6 (273 aa).

One can recognise a Protein kinase domain in the interval Tyr12–Leu267. Residues Ile18–Val26 and Lys41 each bind ATP. The active-site Proton acceptor is the Asp135.

The protein belongs to the protein kinase superfamily. CAMK Ser/Thr protein kinase family. As to quaternary structure, microtubule inner protein component of sperm flagellar doublet microtubules. Interacts with HSP90; this interaction stabilizes and activates TSSK6. Interacts with the heat shock proteins HSPCB, HSPA8 and HSPA1A. These interactions appear to be required for TSSK6 kinase activity. Interacts with TSACC; this interaction is direct and recruits TSACC to HSP90, which is essential for kinase activity. Requires Mg(2+) as cofactor. In terms of processing, autophosphorylated. Post-translationally, ubiquitinated; HSP90 activity negatively regulates ubiquitination and degradation. In terms of tissue distribution, expressed in the testis, localized to the heads of elongating spermatids.

Its subcellular location is the cytoplasm. It is found in the cytoskeleton. The protein resides in the flagellum axoneme. The protein localises to the nucleus. The enzyme catalyses L-seryl-[protein] + ATP = O-phospho-L-seryl-[protein] + ADP + H(+). The catalysed reaction is L-threonyl-[protein] + ATP = O-phospho-L-threonyl-[protein] + ADP + H(+). Functionally, serine/threonine-protein kinase component of the sperm flagellar doublet microtubules. May act as a regulator of sperm motility by mediating phosphorylation of sperm doublet microtubule proteins. Plays a role in DNA condensation during postmeiotic chromatin remodeling and histone-to-protamine transition during spermatogenesis. The protein is Testis-specific serine/threonine-protein kinase 6 of Mus musculus (Mouse).